The primary structure comprises 247 residues: Sugar fermentation stimulation protein homolog (247 aa).

It belongs to the SfsA family.

This chain is Sugar fermentation stimulation protein homolog, found in Oleidesulfovibrio alaskensis (strain ATCC BAA-1058 / DSM 17464 / G20) (Desulfovibrio alaskensis).